The chain runs to 160 residues: 2-C-methyl-D-erythritol 2,4-cyclodiphosphate synthase (160 aa).

A divalent metal cation-binding residues include D11 and H13. Residues 11-13 and 37-38 each bind 4-CDP-2-C-methyl-D-erythritol 2-phosphate; these read DIH and HS. H45 contributes to the a divalent metal cation binding site. 4-CDP-2-C-methyl-D-erythritol 2-phosphate contacts are provided by residues 59–61, 135–138, and R145; these read DIG and TTNE.

It belongs to the IspF family. Homotrimer. It depends on a divalent metal cation as a cofactor.

The catalysed reaction is 4-CDP-2-C-methyl-D-erythritol 2-phosphate = 2-C-methyl-D-erythritol 2,4-cyclic diphosphate + CMP. Its pathway is isoprenoid biosynthesis; isopentenyl diphosphate biosynthesis via DXP pathway; isopentenyl diphosphate from 1-deoxy-D-xylulose 5-phosphate: step 4/6. In terms of biological role, involved in the biosynthesis of isopentenyl diphosphate (IPP) and dimethylallyl diphosphate (DMAPP), two major building blocks of isoprenoid compounds. Catalyzes the conversion of 4-diphosphocytidyl-2-C-methyl-D-erythritol 2-phosphate (CDP-ME2P) to 2-C-methyl-D-erythritol 2,4-cyclodiphosphate (ME-CPP) with a corresponding release of cytidine 5-monophosphate (CMP). This is 2-C-methyl-D-erythritol 2,4-cyclodiphosphate synthase from Synechococcus elongatus (strain ATCC 33912 / PCC 7942 / FACHB-805) (Anacystis nidulans R2).